A 248-amino-acid chain; its full sequence is Probable phosphatase VFMJ11_A0899 (248 aa).

The Zn(2+) site is built by His8, His10, His16, His41, Glu74, His101, His131, Asp193, and His195.

This sequence belongs to the PHP family. Zn(2+) serves as cofactor.

This Aliivibrio fischeri (strain MJ11) (Vibrio fischeri) protein is Probable phosphatase VFMJ11_A0899.